The sequence spans 82 residues: DNA gyrase inhibitor YacG (82 aa).

Zn(2+) is bound by residues C9, C12, C27, and C31. A disordered region spans residues 44–82 (IGLPHEGDPGDAPVEYLDDRDLTQPSPERQNESFHRYSE). Residues 72–82 (RQNESFHRYSE) are compositionally biased toward basic and acidic residues.

The protein belongs to the DNA gyrase inhibitor YacG family. In terms of assembly, interacts with GyrB. Requires Zn(2+) as cofactor.

Its function is as follows. Inhibits all the catalytic activities of DNA gyrase by preventing its interaction with DNA. Acts by binding directly to the C-terminal domain of GyrB, which probably disrupts DNA binding by the gyrase. This is DNA gyrase inhibitor YacG from Rhodopirellula baltica (strain DSM 10527 / NCIMB 13988 / SH1).